The chain runs to 225 residues: MGSEEDKKLTKKQLKAQQFRKSKEEKDQEKDVKKEQAPEGKRPNSAAGNDGEEPVKKKRKTRRGRGGKGKNGKKGNRFIVFVGSLPRDITAVELQNHFKNSSPDQIRLRADKGIAFLEFDADKDRTGIQRRMDIALLQHGTLLKEKKINVELTVGGGGNSQERLEKLKNKNIKLDEERKERLTKMINDGNQKKIAKTTATAAQTSGTDNKPVPAGIHPDRAKLLK.

The interval 1-75 is disordered; the sequence is MGSEEDKKLT…GGKGKNGKKG (75 aa). Basic residues predominate over residues 9-20; it reads LTKKQLKAQQFR. Positions 21 to 42 are enriched in basic and acidic residues; that stretch reads KSKEEKDQEKDVKKEQAPEGKR. S45 carries the phosphoserine modification. Basic residues predominate over residues 56–75; that stretch reads KKKRKTRRGRGGKGKNGKKG. The RRM domain occupies 78–155; that stretch reads FIVFVGSLPR…KKINVELTVG (78 aa). Phosphoserine is present on S160. The interval 187–225 is disordered; that stretch reads NDGNQKKIAKTTATAAQTSGTDNKPVPAGIHPDRAKLLK.

It belongs to the RRM NOP6 family.

It is found in the nucleus. The protein resides in the nucleolus. In terms of biological role, predicted to be involved in rRNA processing. The sequence is that of Nucleolar protein 6 (NOP6) from Saccharomyces cerevisiae (strain ATCC 204508 / S288c) (Baker's yeast).